A 583-amino-acid chain; its full sequence is 2-succinyl-5-enolpyruvyl-6-hydroxy-3-cyclohexene-1-carboxylate synthase (583 aa).

The protein belongs to the TPP enzyme family. MenD subfamily. As to quaternary structure, homodimer. Requires Mg(2+) as cofactor. Mn(2+) serves as cofactor. It depends on thiamine diphosphate as a cofactor.

The catalysed reaction is isochorismate + 2-oxoglutarate + H(+) = 5-enolpyruvoyl-6-hydroxy-2-succinyl-cyclohex-3-ene-1-carboxylate + CO2. Its pathway is quinol/quinone metabolism; 1,4-dihydroxy-2-naphthoate biosynthesis; 1,4-dihydroxy-2-naphthoate from chorismate: step 2/7. It participates in cofactor biosynthesis; phylloquinone biosynthesis. Functionally, catalyzes the thiamine diphosphate-dependent decarboxylation of 2-oxoglutarate and the subsequent addition of the resulting succinic semialdehyde-thiamine pyrophosphate anion to isochorismate to yield 2-succinyl-5-enolpyruvyl-6-hydroxy-3-cyclohexene-1-carboxylate (SEPHCHC). The protein is 2-succinyl-5-enolpyruvyl-6-hydroxy-3-cyclohexene-1-carboxylate synthase of Nostoc sp. (strain PCC 7120 / SAG 25.82 / UTEX 2576).